The sequence spans 225 residues: PKHD-type hydroxylase YbiX (225 aa).

Positions 78–177 constitute a Fe2OG dioxygenase domain; sequence TLSTPLFNRY…RVASFMWIQS (100 aa). Residues His96, Asp98, and His158 each coordinate Fe cation. Residue Arg168 coordinates 2-oxoglutarate.

Fe(2+) is required as a cofactor. L-ascorbate serves as cofactor.

In Escherichia coli O45:K1 (strain S88 / ExPEC), this protein is PKHD-type hydroxylase YbiX.